The following is a 117-amino-acid chain: Transcription elongation factor SPT4 (117 aa).

Residues 1 to 40 (MALETVPKDLRHLRACLLCSLVKTIDQFEYDGCDNCDAYL) form an interaction with SUPT5H region. The C4-type zinc-finger motif lies at 16–36 (CLLCSLVKTIDQFEYDGCDNC).

This sequence belongs to the SPT4 family. As to quaternary structure, interacts with SUPT5H to form the DSIF complex. DSIF interacts with RNA polymerase II and with the positive transcription elongation factor b complex (P-TEFb complex), which is composed of CDK9 and cyclin-T.

Its subcellular location is the nucleus. May function as a component of the DRB sensitivity-inducing factor complex (DSIF complex), which regulates transcription elongation by RNA polymerase II. Probably enhances transcriptional pausing at sites proximal to the promoter, which may in turn facilitate the assembly of an elongation competent RNA polymerase II complex. The chain is Transcription elongation factor SPT4 (supt4h1) from Xenopus laevis (African clawed frog).